The following is a 158-amino-acid chain: Transcription elongation factor GreA (158 aa).

It belongs to the GreA/GreB family.

Necessary for efficient RNA polymerase transcription elongation past template-encoded arresting sites. The arresting sites in DNA have the property of trapping a certain fraction of elongating RNA polymerases that pass through, resulting in locked ternary complexes. Cleavage of the nascent transcript by cleavage factors such as GreA or GreB allows the resumption of elongation from the new 3'terminus. GreA releases sequences of 2 to 3 nucleotides. The chain is Transcription elongation factor GreA from Yersinia pestis.